The chain runs to 270 residues: Small ribosomal subunit protein uS2 (270 aa).

A compositionally biased stretch (acidic residues) spans 207-225; sequence EEPENTEEAAEEAATEEVV. Positions 207–270 are disordered; that stretch reads EEPENTEEAA…SESAPAPVAA (64 aa). Positions 226–258 are enriched in low complexity; the sequence is ETAAAEAAAATNADNWDVAPDAGAGAADWAATD.

It belongs to the universal ribosomal protein uS2 family. In terms of assembly, component of the small ribosomal subunit. Mature ribosomes consist of a small (40S) and a large (60S) subunit. The 40S subunit contains about 33 different proteins and 1 molecule of RNA (18S). The 60S subunit contains about 49 different proteins and 3 molecules of RNA (25S, 5.8S and 5S). Interacts with RPS21.

The protein resides in the cytoplasm. Its function is as follows. Required for the assembly and/or stability of the 40S ribosomal subunit. Required for the processing of the 20S rRNA-precursor to mature 18S rRNA in a late step of the maturation of 40S ribosomal subunits. The chain is Small ribosomal subunit protein uS2 from Yarrowia lipolytica (strain CLIB 122 / E 150) (Yeast).